A 194-amino-acid chain; its full sequence is Peptidyl-tRNA hydrolase (194 aa).

His-22 (proton acceptor) is an active-site residue. Tyr-67, Asn-69, and Asn-115 together coordinate tRNA.

This sequence belongs to the PTH family. As to quaternary structure, monomer.

It localises to the cytoplasm. It catalyses the reaction an N-acyl-L-alpha-aminoacyl-tRNA + H2O = an N-acyl-L-amino acid + a tRNA + H(+). Functionally, hydrolyzes ribosome-free peptidyl-tRNAs (with 1 or more amino acids incorporated), which drop off the ribosome during protein synthesis, or as a result of ribosome stalling. Catalyzes the release of premature peptidyl moieties from peptidyl-tRNA molecules trapped in stalled 50S ribosomal subunits, and thus maintains levels of free tRNAs and 50S ribosomes. This chain is Peptidyl-tRNA hydrolase, found in Granulibacter bethesdensis (strain ATCC BAA-1260 / CGDNIH1).